Consider the following 309-residue polypeptide: Ornithine carbamoyltransferase (309 aa).

Carbamoyl phosphate contacts are provided by residues 57–60 (STRT), glutamine 84, arginine 108, and 135–138 (HPCQ). Residues asparagine 166, aspartate 226, and 230–231 (SM) each bind L-ornithine. Carbamoyl phosphate-binding positions include 265–266 (CL) and arginine 293.

It belongs to the aspartate/ornithine carbamoyltransferase superfamily. OTCase family.

The protein resides in the cytoplasm. The enzyme catalyses carbamoyl phosphate + L-ornithine = L-citrulline + phosphate + H(+). It participates in amino-acid biosynthesis; L-arginine biosynthesis; L-arginine from L-ornithine and carbamoyl phosphate: step 1/3. In terms of biological role, reversibly catalyzes the transfer of the carbamoyl group from carbamoyl phosphate (CP) to the N(epsilon) atom of ornithine (ORN) to produce L-citrulline. This chain is Ornithine carbamoyltransferase, found in Rhizorhabdus wittichii (strain DSM 6014 / CCUG 31198 / JCM 15750 / NBRC 105917 / EY 4224 / RW1) (Sphingomonas wittichii).